A 485-amino-acid chain; its full sequence is MKYIPSIGLEIHSELSTKSKIFCDCPVSFGGEPNTRCCPVCTGMPGTLPVLNKQAVEYTVIAGLALNCKINEFSKMDRKNYFYPDLPKAYQISQFDLPICKDGGLTINTPDGEKFIRIERIHLEEDAGKLLHDNYDRYSLADYNRCGVPLIEIVTKPDLSSAEEAKEFVEKVRLMLLYSGVSDCRMEEGSLRADVNVSIRPIGTDELGTRTEMKNINSIKAIARAIDYEINRQSELLNEGKKIIQETRRWDDSKGESKALRSKEDAHDYRYFPEPDIVPVTFKSEDIEKLRKSLPELPDKRFERYTKTYSVNQADANLLLTSVSLSDFFEAAAAESGNPKQAANFIVVEVLRRLKDSNMSPEDIPFDGKLLARLLRLMDSEKITPNNAKKVLSEMFETGKEPDTIVDERGYKIINDTAEVESMVKEIISSNEKAVGEYLEGKEKTFGYLMGQCSRALAGRGNPKVVQEILRSELNKLRDIDINVH.

The protein belongs to the GatB/GatE family. GatB subfamily. In terms of assembly, heterotrimer of A, B and C subunits.

The enzyme catalyses L-glutamyl-tRNA(Gln) + L-glutamine + ATP + H2O = L-glutaminyl-tRNA(Gln) + L-glutamate + ADP + phosphate + H(+). It carries out the reaction L-aspartyl-tRNA(Asn) + L-glutamine + ATP + H2O = L-asparaginyl-tRNA(Asn) + L-glutamate + ADP + phosphate + 2 H(+). Functionally, allows the formation of correctly charged Asn-tRNA(Asn) or Gln-tRNA(Gln) through the transamidation of misacylated Asp-tRNA(Asn) or Glu-tRNA(Gln) in organisms which lack either or both of asparaginyl-tRNA or glutaminyl-tRNA synthetases. The reaction takes place in the presence of glutamine and ATP through an activated phospho-Asp-tRNA(Asn) or phospho-Glu-tRNA(Gln). This chain is Aspartyl/glutamyl-tRNA(Asn/Gln) amidotransferase subunit B, found in Ruminiclostridium cellulolyticum (strain ATCC 35319 / DSM 5812 / JCM 6584 / H10) (Clostridium cellulolyticum).